The sequence spans 350 residues: Transmembrane protein 185B (350 aa).

7 helical membrane passes run 16-36 (LIYA…DGII), 41-61 (WAVF…ASVG), 81-101 (FKAM…EILV), 111-131 (FWLL…AACV), 168-188 (WLVV…VVLY), 211-231 (VTMA…EVLL), and 240-260 (TFSY…LMAT).

This sequence belongs to the TMEM185 family.

The protein localises to the membrane. This chain is Transmembrane protein 185B (Tmem185b), found in Mus musculus (Mouse).